We begin with the raw amino-acid sequence, 360 residues long: Peptide chain release factor 1 (360 aa).

Gln235 is modified (N5-methylglutamine).

It belongs to the prokaryotic/mitochondrial release factor family. In terms of processing, methylated by PrmC. Methylation increases the termination efficiency of RF1.

The protein resides in the cytoplasm. Peptide chain release factor 1 directs the termination of translation in response to the peptide chain termination codons UAG and UAA. The sequence is that of Peptide chain release factor 1 from Methylobacillus flagellatus (strain ATCC 51484 / DSM 6875 / VKM B-1610 / KT).